The following is a 939-amino-acid chain: Isoleucine--tRNA ligase (939 aa).

A 'HIGH' region motif is present at residues 57-67 (PYANGHIHIGH). Glu563 provides a ligand contact to L-isoleucyl-5'-AMP. Residues 604–608 (KMSKS) carry the 'KMSKS' region motif. Residue Lys607 coordinates ATP. Residues Cys903, Cys906, Cys921, and Cys924 each coordinate Zn(2+).

Belongs to the class-I aminoacyl-tRNA synthetase family. IleS type 1 subfamily. In terms of assembly, monomer. Zn(2+) serves as cofactor.

The protein localises to the cytoplasm. It carries out the reaction tRNA(Ile) + L-isoleucine + ATP = L-isoleucyl-tRNA(Ile) + AMP + diphosphate. Functionally, catalyzes the attachment of isoleucine to tRNA(Ile). As IleRS can inadvertently accommodate and process structurally similar amino acids such as valine, to avoid such errors it has two additional distinct tRNA(Ile)-dependent editing activities. One activity is designated as 'pretransfer' editing and involves the hydrolysis of activated Val-AMP. The other activity is designated 'posttransfer' editing and involves deacylation of mischarged Val-tRNA(Ile). In Sulfurihydrogenibium sp. (strain YO3AOP1), this protein is Isoleucine--tRNA ligase.